A 1090-amino-acid chain; its full sequence is DNA damage-binding protein 1 (1090 aa).

Belongs to the DDB1 family. Component of the UV-DDB complex, which is composed of DDB1 and DDB2. Expressed in proliferating tissues. Highly expressed in shoot apical meristem (SAM). Expressed in roots, young leaves, flag leaves, and panicles. Not detected in mature leaves.

Its subcellular location is the nucleus. Its function is as follows. Required for DNA repair. Binds to DDB2 to form the UV-damaged DNA-binding protein complex (the UV-DDB complex). The UV-DDB complex may recognize UV-induced DNA damage and recruit proteins of the nucleotide excision repair pathway (the NER pathway) to initiate DNA repair. May function as the substrate recognition module for a DCX (DDB1-CUL4-X-box) E3 ubiquitin-protein ligase complex. The protein is DNA damage-binding protein 1 of Oryza sativa subsp. japonica (Rice).